Reading from the N-terminus, the 418-residue chain is Tyrosine--tRNA ligase 1 (418 aa).

Residue tyrosine 34 participates in L-tyrosine binding. Residues 39–48 (PTADSLHIGH) carry the 'HIGH' region motif. Residues tyrosine 169 and glutamine 173 each coordinate L-tyrosine. The short motif at 230-234 (KFGKT) is the 'KMSKS' region element. An ATP-binding site is contributed by lysine 233. One can recognise an S4 RNA-binding domain in the interval 352 to 418 (TVLIDLLVES…GKKKYFLIRY (67 aa)).

Belongs to the class-I aminoacyl-tRNA synthetase family. TyrS type 1 subfamily. In terms of assembly, homodimer.

The protein resides in the cytoplasm. It catalyses the reaction tRNA(Tyr) + L-tyrosine + ATP = L-tyrosyl-tRNA(Tyr) + AMP + diphosphate + H(+). In terms of biological role, catalyzes the attachment of tyrosine to tRNA(Tyr) in a two-step reaction: tyrosine is first activated by ATP to form Tyr-AMP and then transferred to the acceptor end of tRNA(Tyr). This is Tyrosine--tRNA ligase 1 from Bacillus cereus (strain ATCC 14579 / DSM 31 / CCUG 7414 / JCM 2152 / NBRC 15305 / NCIMB 9373 / NCTC 2599 / NRRL B-3711).